The following is a 389-amino-acid chain: (S)-8-oxocitronellyl enol synthase CYC1 (389 aa).

NADP(+) is bound by residues 34 to 36 (TGI), 62 to 63 (RR), 80 to 81 (DV), 104 to 105 (AW), and Gln-138. Active-site residues include Lys-142 and Tyr-174. Lys-142 and Tyr-174 together coordinate substrate. NADP(+) contacts are provided by residues Tyr-174, Val-201, and 208–210 (SMM). Substrate is bound at residue Ser-350.

It belongs to the short-chain dehydrogenases/reductases (SDR) family. Highly divergent.

It catalyses the reaction (S)-8-oxocitronellyl enol + NADP(+) = (6E)-8-oxogeranial + NADPH + H(+). The enzyme catalyses (S)-8-oxocitronellyl enol + NAD(+) = (6E)-8-oxogeranial + NADH + H(+). In terms of biological role, iridoid synthase that catalyzes the first step in generation of the iridoid ring scaffold using the linear monoterpene (6E)-8-oxogeranial as substrate. Iridoids comprise a large family of distinctive bicyclic monoterpenes that possess a wide range of pharmacological activities, including anticancer, anti-inflammatory, antifungal and antibacterial activities. The chain is (S)-8-oxocitronellyl enol synthase CYC1 from Camptotheca acuminata (Happy tree).